The chain runs to 400 residues: Chalcone synthase 7 (400 aa).

Residue C168 is part of the active site.

It belongs to the thiolase-like superfamily. Chalcone/stilbene synthases family.

The enzyme catalyses (E)-4-coumaroyl-CoA + 3 malonyl-CoA + 3 H(+) = 2',4,4',6'-tetrahydroxychalcone + 3 CO2 + 4 CoA. Its pathway is secondary metabolite biosynthesis; flavonoid biosynthesis. Functionally, the primary product of this enzyme is 4,2',4',6'-tetrahydroxychalcone (also termed naringenin-chalcone or chalcone) which can under specific conditions spontaneously isomerize into naringenin. The chain is Chalcone synthase 7 (CHS7) from Sorghum bicolor (Sorghum).